The chain runs to 357 residues: Sulfate/thiosulfate import ATP-binding protein CysA (357 aa).

Residues 3–237 (ITIQNLNKHF…PENAFVTEFL (235 aa)) enclose the ABC transporter domain. 35–42 (GPSGCGKT) is an ATP binding site.

Belongs to the ABC transporter superfamily. Sulfate/tungstate importer (TC 3.A.1.6) family. In terms of assembly, the complex is composed of two ATP-binding proteins (CysA), two transmembrane proteins (CysT and CysW) and a solute-binding protein (CysP).

The protein resides in the cell inner membrane. It catalyses the reaction sulfate(out) + ATP + H2O = sulfate(in) + ADP + phosphate + H(+). The enzyme catalyses thiosulfate(out) + ATP + H2O = thiosulfate(in) + ADP + phosphate + H(+). Part of the ABC transporter complex CysAWTP involved in sulfate/thiosulfate import. Responsible for energy coupling to the transport system. The protein is Sulfate/thiosulfate import ATP-binding protein CysA of Neisseria meningitidis serogroup B (strain ATCC BAA-335 / MC58).